The sequence spans 223 residues: uncharacterized protein (223 aa).

The next 7 membrane-spanning stretches (helical) occupy residues 25–45, 46–66, 78–98, 105–125, 140–160, 161–181, and 199–219; these read TYFL…ATMA, IGIS…ILFF, LVWT…MLNF, GPIV…GLSA, FLFA…FVGS, TVAH…FILF, and ISMY…LGIM.

The protein belongs to the BI1 family.

The protein localises to the cell membrane. This is an uncharacterized protein from Vibrio cholerae serotype O1 (strain ATCC 39315 / El Tor Inaba N16961).